We begin with the raw amino-acid sequence, 735 residues long: Dolichyl-diphosphooligosaccharide--protein glycosyltransferase subunit STT3B (735 aa).

The Cytoplasmic portion of the chain corresponds to 1-38 (MGGKSEPAKSESMATKPDLLNTSFFSFKSLKLKTKQQE). Residues 39 to 59 (LLLRISILGLVYILAFIARLF) form a helical membrane-spanning segment. At 60-142 (SVLRYESMIH…VHIREVCVLT (83 aa)) the chain is on the lumenal side. The short motif at 70-72 (EFD) is the DXD motif 1 element. D72 is a Mn(2+) binding site. The helical transmembrane segment at 143–161 (APFFASNTTLVAYFFGKEL) threads the bilayer. Over 162-163 (WD) the chain is Cytoplasmic. The helical transmembrane segment at 164-181 (TGAGLVAAVLIAICPGYI) threads the bilayer. Residues 182–192 (SRSVAGSYDNE) are Lumenal-facing. D190 and E192 together coordinate Mn(2+). The DXD motif 2 motif lies at 190-192 (DNE). The helical transmembrane segment at 193–212 (AVAIFALLLTFYLFVKAVNT) threads the bilayer. Residues 213-214 (GS) lie on the Cytoplasmic side of the membrane. The helical transmembrane segment at 215 to 229 (LAWALASAFGYFYMV) threads the bilayer. Over 230–234 (SAWGG) the chain is Lumenal. The helical transmembrane segment at 235–251 (YVFIINLVPLYVLVLLI) threads the bilayer. At 252 to 256 (TGRYS) the chain is on the cytoplasmic side. The chain crosses the membrane as a helical span at residues 257–282 (MRLYIAYNCMYILGMLLAMQIRFVGF). At 283-290 (QHVQSGEH) the chain is on the lumenal side. A helical transmembrane segment spans residues 291–310 (MGAMGVFLLMQVFYFLDWVK). Residues 311–326 (YQLNDTKLFQTFLRIT) are Cytoplasmic-facing. The chain crosses the membrane as a helical span at residues 327–347 (VTSAILVGGVAVGVGTASGYI). Residues 348–380 (SPWTGRFYSLLDPTYAKDHIPIIASVSEHQPTA) lie on the Lumenal side of the membrane. The SVSE motif signature appears at 372-375 (SVSE). Residues 381–403 (WSSFMFDYHILLFLFPAGLYFCF) form a helical membrane-spanning segment. Topologically, residues 404 to 409 (KRLTDA) are cytoplasmic. Residues 410 to 426 (TIFIVMYGLTSLYFAGV) form a helical membrane-spanning segment. At 427 to 430 (MVRL) the chain is on the lumenal side. R429 is a binding site for dolichyl diphosphooligosaccharide. Residues 431–452 (ILVATPAVCLISAIAVSATIKN) form a helical membrane-spanning segment. Topologically, residues 453–494 (LTSLLRTKQKVSQTGSTKGAGSSKASSKVTLDQSQPFQKNGA) are cytoplasmic. Residues 495–515 (IALLVGVFYLLSRYAIHCTWV) traverse the membrane as a helical segment. Residues 516–735 (TAEAYSSPSI…YRVKPPTNRL (220 aa)) are Lumenal-facing. Positions 562–564 (WWD) are interacts with target acceptor peptide in protein substrate. The short motif at 562–566 (WWDYG) is the WWDYG motif element. Y567 is a dolichyl diphosphooligosaccharide binding site. Residues N574 and N581 are each glycosylated (N-linked (GlcNAc...) asparagine). N-linked (GlcNAc...) (high mannose) asparagine glycosylation is present at N585. The DK motif signature appears at 629 to 636 (DINKFLWM).

This sequence belongs to the STT3 family. Component of the oligosaccharyltransferase (OST) complex. Mg(2+) serves as cofactor. Requires Mn(2+) as cofactor. In terms of tissue distribution, expressed preferentially in the root but also in the shoot.

It is found in the endoplasmic reticulum membrane. It catalyses the reaction a di-trans,poly-cis-dolichyl diphosphooligosaccharide + L-asparaginyl-[protein] = N(4)-(oligosaccharide-(1-&gt;4)-N-acetyl-beta-D-glucosaminyl-(1-&gt;4)-N-acetyl-beta-D-glucosaminyl)-L-asparaginyl-[protein] + a di-trans,poly-cis-dolichyl diphosphate + H(+). It functions in the pathway protein modification; protein glycosylation. Functionally, catalytic subunit of the oligosaccharyl transferase (OST) complex that catalyzes the initial transfer of a defined glycan (Glc(3)Man(9)GlcNAc(2) in eukaryotes) from the lipid carrier dolichol-pyrophosphate to an asparagine residue within an Asn-X-Ser/Thr consensus motif in nascent polypeptide chains, the first step in protein N-glycosylation. N-glycosylation occurs cotranslationally and the complex associates with the Sec61 complex at the channel-forming translocon complex that mediates protein translocation across the endoplasmic reticulum (ER). All subunits are required for a maximal enzyme activity. This subunit contains the active site and the acceptor peptide and donor lipid-linked oligosaccharide (LLO) binding pockets. This Arabidopsis thaliana (Mouse-ear cress) protein is Dolichyl-diphosphooligosaccharide--protein glycosyltransferase subunit STT3B (STT3B).